A 517-amino-acid chain; its full sequence is MSTSADTDTIKKPILAVPEPALADTHSEEISRSGEEHESENNEHSDEEGDNYSEREQSVSTEPLDTLPLRKKLKNLSYITFFAIGIGLLWPWNCILSASQYFKHDIFKDTSIWAKIFTSSMMSFSTISSMLFNIYLAKRQYKYSRRVINGLVWEIIVFTVMCFFTILHFLLPKWFNFMFIMMLVVISSMGTAMTQNGIMAIANVFGSEYSQGVMVGQAVAGVLPSLVLFALAFIENSSVSTTGGILLYFFTTTLVVTICVVMFSVSKISRKVNENWNVEDGHITDVLLGSLRSNEEEIRIVGRIDQMEDEDHRRTNGTRDDNDEGEELQLKVPFEVLFAKLKYLVLSIFTTFVVTLVFPVFASATYVTGLPLSNAQYIPLIFTLWNLGDLYGRVIADWPMFRDQKFTPRKTFIYSLLRVAAIPLFLMFTAITSSSSGDEEHNGSVIVDLCYMLLQFLFGVTNGHVISMSFMKVPEQLDNDDEKEAAGGFTNIFVSTGLALGSIISYVFVFIIDFIIR.

Residues 1 to 63 (MSTSADTDTI…EREQSVSTEP (63 aa)) are disordered. Positions 25–44 (THSEEISRSGEEHESENNEH) are enriched in basic and acidic residues. Residues Ser45 and Ser58 each carry the phosphoserine modification. 11 helical membrane-spanning segments follow: residues 76 to 96 (LSYITFFAIGIGLLWPWNCIL), 116 to 136 (IFTSSMMSFSTISSMLFNIYL), 151 to 171 (LVWEIIVFTVMCFFTILHFLL), 174 to 194 (WFNFMFIMMLVVISSMGTAMT), 214 to 234 (MVGQAVAGVLPSLVLFALAFI), 243 to 263 (GGILLYFFTTTLVVTICVVMF), 344 to 364 (LVLSIFTTFVVTLVFPVFASA), 367 to 387 (VTGLPLSNAQYIPLIFTLWNL), 411 to 431 (TFIYSLLRVAAIPLFLMFTAI), 446 to 466 (IVDLCYMLLQFLFGVTNGHVI), and 492 to 512 (IFVSTGLALGSIISYVFVFII).

This sequence belongs to the SLC29A/ENT transporter (TC 2.A.57) family.

It is found in the membrane. Its function is as follows. Has broad nucleoside selectivity (uridine, adenosine and cytidine) and most likely functions to transport nucleosides across intracellular membranes. The protein is Nucleoside transporter FUN26 (FUN26) of Saccharomyces cerevisiae (strain ATCC 204508 / S288c) (Baker's yeast).